The chain runs to 527 residues: Lysine--tRNA ligase (527 aa).

The 'HIGH' region signature appears at 44 to 52; the sequence is PSGLPHIGT. The 'KMSKS' region motif lies at 290-294; the sequence is KISKS. Lys-293 serves as a coordination point for ATP.

The protein belongs to the class-I aminoacyl-tRNA synthetase family.

Its subcellular location is the cytoplasm. The catalysed reaction is tRNA(Lys) + L-lysine + ATP = L-lysyl-tRNA(Lys) + AMP + diphosphate. The chain is Lysine--tRNA ligase from Roseobacter denitrificans (strain ATCC 33942 / OCh 114) (Erythrobacter sp. (strain OCh 114)).